The sequence spans 315 residues: Probable cell division protein WhiA (315 aa).

Positions 275-309 (TLKELGEMVSSGTVSKSGVNHRLRKIDEIADALRR) form a DNA-binding region, H-T-H motif.

Belongs to the WhiA family.

Involved in cell division and chromosome segregation. The sequence is that of Probable cell division protein WhiA from Lysinibacillus sphaericus (strain C3-41).